The following is a 349-amino-acid chain: Isopentenyl-diphosphate delta-isomerase (349 aa).

6–7 (RK) contributes to the substrate binding site. Residues 62–64 (AMT), Ser-93, and Asn-122 each bind FMN. Residue Gln-152 participates in substrate binding. Glu-153 is a Mg(2+) binding site. FMN is bound by residues Lys-184, Thr-214, 258–259 (GG), and 280–281 (AG).

This sequence belongs to the IPP isomerase type 2 family. As to quaternary structure, homooctamer. Dimer of tetramers. The cofactor is FMN. NADPH serves as cofactor. It depends on Mg(2+) as a cofactor.

Its subcellular location is the cytoplasm. The catalysed reaction is isopentenyl diphosphate = dimethylallyl diphosphate. Involved in the biosynthesis of isoprenoids. Catalyzes the 1,3-allylic rearrangement of the homoallylic substrate isopentenyl (IPP) to its allylic isomer, dimethylallyl diphosphate (DMAPP). The chain is Isopentenyl-diphosphate delta-isomerase from Bacillus mycoides (strain KBAB4) (Bacillus weihenstephanensis).